Reading from the N-terminus, the 348-residue chain is Rhodopsin (348 aa).

The residue at position 1 (Met-1) is an N-acetylmethionine. At 1-36 (MNGTEGPNFYVPFSNKTGVVRSPFEEPQYYLAEPWQ) the chain is on the extracellular side. 2 N-linked (GlcNAc...) asparagine glycosylation sites follow: Asn-2 and Asn-15. A helical membrane pass occupies residues 37–61 (FSCLAAYMFMLIVLGFPINFLTLYV). The Cytoplasmic portion of the chain corresponds to 62–73 (TIQHKKLRTPLN). The helical transmembrane segment at 74–96 (YILLNLAIADLFMVFGGFTTTLY) threads the bilayer. The Extracellular segment spans residues 97–110 (TSLHGYFVFGPTGC). Residues Cys-110 and Cys-187 are joined by a disulfide bond. The helical transmembrane segment at 111–133 (DLEGFFATLGGEIALWSLVVLAI) threads the bilayer. The short motif at 134 to 136 (ERY) is the 'Ionic lock' involved in activated form stabilization element. Topologically, residues 134–152 (ERYIVVCKPMSNFRFGENH) are cytoplasmic. Residues 153–173 (AIMGVAFTWVMALACAAPPLV) form a helical membrane-spanning segment. Over 174-202 (GWSRYIPEGMQCSCGIDYYTLKPEVNNES) the chain is Extracellular. Zn(2+) is bound at residue Glu-201. A helical membrane pass occupies residues 203–224 (FVIYMFVVHFTIPMVVIFFCYG). Residues 225–252 (QLVFTVKEAAAQQQESATTQKAEKEVTR) lie on the Cytoplasmic side of the membrane. A helical membrane pass occupies residues 253-274 (MVIIMVIAFLICWLPYAGVAFY). At 275–286 (IFTHQGSNFGPI) the chain is on the extracellular side. Gln-279 provides a ligand contact to Zn(2+). A helical transmembrane segment spans residues 287 to 308 (LMTLPAFFAKTSAVYNPVIYIM). The residue at position 296 (Lys-296) is an N6-(retinylidene)lysine. At 309 to 348 (LNKQFRTCMLTTLCCGKIPLGDDEASATASKTETSQVAPA) the chain is on the cytoplasmic side. 2 S-palmitoyl cysteine lipidation sites follow: Cys-322 and Cys-323. The interaction with SAG stretch occupies residues 330–348 (DDEASATASKTETSQVAPA). The residue at position 334 (Ser-334) is a Phosphoserine. At Thr-336 the chain carries Phosphothreonine. A Phosphoserine modification is found at Ser-338. Phosphothreonine is present on residues Thr-340 and Thr-342. Ser-343 is subject to Phosphoserine.

Belongs to the G-protein coupled receptor 1 family. Opsin subfamily. Homodimer. May form a complex composed of RHO, GRK1 and RCVRN in a Ca(2+)-dependent manner; RCVRN prevents the interaction between GRK1 and RHO. Interacts with GRK1. Interacts (phosphorylated form) with SAG. Interacts with GNAT1. Interacts with GNAT3. SAG and G-proteins compete for a common binding site. Interacts with PRCD; the interaction promotes PRCD stability. Forms a complex with ASAP1 and ARF4. Forms a complex with ASAP1, RAB11A, Rabin8/RAB3IP, ARF4 and RAB11FIP3; the complex regulates Golgi-to-cilia rhodopsin/RHO transport in photoreceptors. Post-translationally, phosphorylated on some or all of the serine and threonine residues present in the C-terminal region. In terms of processing, contains one covalently linked retinal chromophore. Upon light absorption, the covalently bound 11-cis-retinal is converted to all-trans-retinal. After hydrolysis of the Schiff base and release of the covalently bound all-trans-retinal, active rhodopsin is regenerated by binding of a fresh molecule of 11-cis-retinal.

Its subcellular location is the membrane. The protein resides in the cell projection. The protein localises to the cilium. It localises to the photoreceptor outer segment. Photoreceptor required for image-forming vision at low light intensity. Required for photoreceptor cell viability after birth. Light-induced isomerization of 11-cis to all-trans retinal triggers a conformational change that activates signaling via G-proteins. Subsequent receptor phosphorylation mediates displacement of the bound G-protein alpha subunit by the arrestin SAG and terminates signaling. This is Rhodopsin (RHO) from Caluromys philander (Bare-tailed woolly opossum).